A 344-amino-acid polypeptide reads, in one-letter code: Hypoxia-inducible factor 1-alpha inhibitor (344 aa).

Ala-2 carries the N-acetylalanine modification. One can recognise a JmjC domain in the interval 133-303; sequence GRVYLQQTLN…PKRIEYPLKA (171 aa). Tyr-136 serves as a coordination point for 2-oxoglutarate. Residues Asp-143 and 173–174 each bind substrate; that span reads LT. 2-oxoglutarate is bound at residue Thr-187. Positions 190 and 192 each coordinate Fe cation. Position 192-194 (192-194) interacts with substrate; that stretch reads DEQ. 2-oxoglutarate is bound by residues Asn-196 and Lys-205. Position 229-230 (229-230) interacts with substrate; sequence RQ. His-270 serves as a coordination point for Fe cation. 2-oxoglutarate is bound at residue Asn-285. The substrate site is built by Ala-291 and Asn-312.

In terms of assembly, homodimer; homodimerization is essential for catalytic activity. Requires Fe(2+) as cofactor.

The protein resides in the nucleus. It localises to the cytoplasm. It is found in the perinuclear region. It carries out the reaction L-asparaginyl-[hypoxia-inducible factor alpha subunit] + 2-oxoglutarate + O2 = (3S)-3-hydroxy-L-asparaginyl-[hypoxia-inducible factor alpha subunit] + succinate + CO2. The enzyme catalyses L-histidyl-[ankyrin-repeat domain protein] + 2-oxoglutarate + O2 = (3S)-3-hydroxy-L-histidyl-[ankyrin-repeat domain protein] + succinate + CO2. The catalysed reaction is L-asparaginyl-[ankyrin-repeat domain protein] + 2-oxoglutarate + O2 = (3S)-3-hydroxy-L-asparaginyl-[ankyrin-repeat domain protein] + succinate + CO2. It catalyses the reaction L-aspartyl-[ankyrin-repeat domain protein] + 2-oxoglutarate + O2 = (3S)-3-hydroxy-L-aspartyl-[ankyrin-repeat domain protein] + succinate + CO2. In terms of biological role, hydroxylates a specific Asn residue in the C-terminal transactivation domain (CAD) of HIF-1 alpha. The hydroxylation prevents interaction of HIF-1 with transcriptional coactivators. Also hydroxylates specific Asn, Asp and His residues within ankyrin repeat domain-containing proteins. This chain is Hypoxia-inducible factor 1-alpha inhibitor (hif1an), found in Danio rerio (Zebrafish).